The primary structure comprises 94 residues: Small ribosomal subunit protein bS18 (94 aa).

The protein belongs to the bacterial ribosomal protein bS18 family. Part of the 30S ribosomal subunit. Forms a tight heterodimer with protein bS6.

Binds as a heterodimer with protein bS6 to the central domain of the 16S rRNA, where it helps stabilize the platform of the 30S subunit. In Albidiferax ferrireducens (strain ATCC BAA-621 / DSM 15236 / T118) (Rhodoferax ferrireducens), this protein is Small ribosomal subunit protein bS18.